Consider the following 64-residue polypeptide: Alpha-conotoxin CnIL (64 aa).

The signal sequence occupies residues 1–21; it reads MGMRMMFTVFLLVVLTTTVVS. Residues 22–49 constitute a propeptide that is removed on maturation; it reads FPSDSASDGRDDEAKDERSDIYESKRDG. 2 disulfides stabilise this stretch: cysteine 51–cysteine 56 and cysteine 52–cysteine 62. The residue at position 62 (cysteine 62) is a Cysteine amide.

It belongs to the conotoxin A superfamily. As to expression, expressed by the venom duct.

The protein localises to the secreted. The sequence is that of Alpha-conotoxin CnIL from Conus consors (Singed cone).